We begin with the raw amino-acid sequence, 335 residues long: N-acetyl-gamma-glutamyl-phosphate reductase (335 aa).

Cys-155 is an active-site residue.

It belongs to the NAGSA dehydrogenase family. Type 1 subfamily.

The protein localises to the cytoplasm. The catalysed reaction is N-acetyl-L-glutamate 5-semialdehyde + phosphate + NADP(+) = N-acetyl-L-glutamyl 5-phosphate + NADPH + H(+). Its pathway is amino-acid biosynthesis; L-arginine biosynthesis; N(2)-acetyl-L-ornithine from L-glutamate: step 3/4. Catalyzes the NADPH-dependent reduction of N-acetyl-5-glutamyl phosphate to yield N-acetyl-L-glutamate 5-semialdehyde. This chain is N-acetyl-gamma-glutamyl-phosphate reductase, found in Pasteurella multocida (strain Pm70).